The sequence spans 128 residues: DNA-directed RNA polymerase subunit omega (128 aa).

It belongs to the RNA polymerase subunit omega family. The RNAP catalytic core consists of 2 alpha, 1 beta, 1 beta' and 1 omega subunit. When a sigma factor is associated with the core the holoenzyme is formed, which can initiate transcription.

The enzyme catalyses RNA(n) + a ribonucleoside 5'-triphosphate = RNA(n+1) + diphosphate. Its function is as follows. Promotes RNA polymerase assembly. Latches the N- and C-terminal regions of the beta' subunit thereby facilitating its interaction with the beta and alpha subunits. This chain is DNA-directed RNA polymerase subunit omega, found in Neorickettsia sennetsu (strain ATCC VR-367 / Miyayama) (Ehrlichia sennetsu).